We begin with the raw amino-acid sequence, 358 residues long: MTPTAASELLLSIESTCDETAAAVIRRDGTVLGQCIATQETLHEQFGGVVPEIAARAHLERILPVIDTALTQAKVRGEDLTAIAVADRPGLAGSLLVGVVAAKTLALAWNKPLISLNHLHAHLYACQLIEGAPANIYPAIGLIVSGGHTSLYVCRTAIDLEYLGGTIDDAAGEAFDKVAAMLSLPFPGGIEVAKLASQGNDKAYSFPRSMIHDPGDDFSFSGLKTAVRYAIVGPGRQDFASLDISDQVKRDVCASFEAAVVDVLVSKCRRAIKRHRNRNNDPQNSINRLIVGGGVAANQRLRRDLQAAADKDGFELWIAPPHLCTDNAVMGAIAWKKFEAEQFASLDLDITPGLQRGF.

The Fe cation site is built by H118 and H122. Residues 143–147 (IVSGG), D176, G189, and N298 each bind substrate. Fe cation is bound at residue D326.

It belongs to the KAE1 / TsaD family. It depends on Fe(2+) as a cofactor.

It is found in the cytoplasm. It carries out the reaction L-threonylcarbamoyladenylate + adenosine(37) in tRNA = N(6)-L-threonylcarbamoyladenosine(37) in tRNA + AMP + H(+). Required for the formation of a threonylcarbamoyl group on adenosine at position 37 (t(6)A37) in tRNAs that read codons beginning with adenine. Is involved in the transfer of the threonylcarbamoyl moiety of threonylcarbamoyl-AMP (TC-AMP) to the N6 group of A37, together with TsaE and TsaB. TsaD likely plays a direct catalytic role in this reaction. This chain is tRNA N6-adenosine threonylcarbamoyltransferase, found in Rhodopirellula baltica (strain DSM 10527 / NCIMB 13988 / SH1).